The chain runs to 181 residues: Protein Syd (181 aa).

It belongs to the Syd family.

The protein resides in the cell inner membrane. Its function is as follows. Interacts with the SecY protein in vivo. May bind preferentially to an uncomplexed state of SecY, thus functioning either as a chelating agent for excess SecY in the cell or as a regulatory factor that negatively controls the translocase function. This is Protein Syd from Klebsiella pneumoniae (strain 342).